Reading from the N-terminus, the 358-residue chain is Methylthioribose-1-phosphate isomerase (358 aa).

Residues 54-56 (RGA), Arg96, and Gln205 contribute to the substrate site. Asp246 (proton donor) is an active-site residue. 256–257 (NK) is a binding site for substrate.

Belongs to the eIF-2B alpha/beta/delta subunits family. MtnA subfamily.

The enzyme catalyses 5-(methylsulfanyl)-alpha-D-ribose 1-phosphate = 5-(methylsulfanyl)-D-ribulose 1-phosphate. It participates in amino-acid biosynthesis; L-methionine biosynthesis via salvage pathway; L-methionine from S-methyl-5-thio-alpha-D-ribose 1-phosphate: step 1/6. In terms of biological role, catalyzes the interconversion of methylthioribose-1-phosphate (MTR-1-P) into methylthioribulose-1-phosphate (MTRu-1-P). This Pseudomonas syringae pv. syringae (strain B728a) protein is Methylthioribose-1-phosphate isomerase.